A 193-amino-acid chain; its full sequence is Xanthine phosphoribosyltransferase (193 aa).

The xanthine site is built by L20 and T27. A 5-phospho-alpha-D-ribose 1-diphosphate-binding site is contributed by 128–132 (ANGQA). Residue K156 coordinates xanthine.

It belongs to the purine/pyrimidine phosphoribosyltransferase family. Xpt subfamily. In terms of assembly, homodimer.

The protein localises to the cytoplasm. The enzyme catalyses XMP + diphosphate = xanthine + 5-phospho-alpha-D-ribose 1-diphosphate. It participates in purine metabolism; XMP biosynthesis via salvage pathway; XMP from xanthine: step 1/1. Functionally, converts the preformed base xanthine, a product of nucleic acid breakdown, to xanthosine 5'-monophosphate (XMP), so it can be reused for RNA or DNA synthesis. The polypeptide is Xanthine phosphoribosyltransferase (Streptococcus pneumoniae serotype 2 (strain D39 / NCTC 7466)).